A 418-amino-acid chain; its full sequence is Gamma-glutamyl phosphate reductase (418 aa).

Belongs to the gamma-glutamyl phosphate reductase family.

It is found in the cytoplasm. It carries out the reaction L-glutamate 5-semialdehyde + phosphate + NADP(+) = L-glutamyl 5-phosphate + NADPH + H(+). The protein operates within amino-acid biosynthesis; L-proline biosynthesis; L-glutamate 5-semialdehyde from L-glutamate: step 2/2. Its function is as follows. Catalyzes the NADPH-dependent reduction of L-glutamate 5-phosphate into L-glutamate 5-semialdehyde and phosphate. The product spontaneously undergoes cyclization to form 1-pyrroline-5-carboxylate. The sequence is that of Gamma-glutamyl phosphate reductase from Parafrankia sp. (strain EAN1pec).